The chain runs to 98 residues: NADH-ubiquinone oxidoreductase chain 4L (98 aa).

3 helical membrane-spanning segments follow: residues 1-21 (MVLIKLNIIVAFMLALSGVLI), 36-56 (MMLSLFIFMAAMITHFHMFSI), and 61-81 (LILLVFSACEAGVGLALLVSI).

Belongs to the complex I subunit 4L family.

The protein localises to the mitochondrion membrane. It catalyses the reaction a ubiquinone + NADH + 5 H(+)(in) = a ubiquinol + NAD(+) + 4 H(+)(out). Its function is as follows. Core subunit of the mitochondrial membrane respiratory chain NADH dehydrogenase (Complex I) which catalyzes electron transfer from NADH through the respiratory chain, using ubiquinone as an electron acceptor. Part of the enzyme membrane arm which is embedded in the lipid bilayer and involved in proton translocation. This chain is NADH-ubiquinone oxidoreductase chain 4L (MT-ND4L), found in Didelphis virginiana (North American opossum).